A 138-amino-acid polypeptide reads, in one-letter code: Large ribosomal subunit protein uL14 (138 aa).

The protein belongs to the universal ribosomal protein uL14 family. As to quaternary structure, part of the 50S ribosomal subunit. Forms a cluster with proteins L3 and L24e, part of which may contact the 16S rRNA in 2 intersubunit bridges. Contacts initiation factor aIF-6.

Its subcellular location is the cytoplasm. In terms of biological role, binds to 23S rRNA. Forms part of two intersubunit bridges in the 70S ribosome. The polypeptide is Large ribosomal subunit protein uL14 (Saccharolobus solfataricus (strain ATCC 35092 / DSM 1617 / JCM 11322 / P2) (Sulfolobus solfataricus)).